The primary structure comprises 524 residues: Phenylalanine--tRNA ligase alpha subunit (524 aa).

Positions 362, 441, and 467 each coordinate L-phenylalanine.

The protein belongs to the class-II aminoacyl-tRNA synthetase family. Phe-tRNA synthetase alpha subunit type 2 subfamily. In terms of assembly, tetramer of two alpha and two beta subunits. Mg(2+) is required as a cofactor.

Its subcellular location is the cytoplasm. It carries out the reaction tRNA(Phe) + L-phenylalanine + ATP = L-phenylalanyl-tRNA(Phe) + AMP + diphosphate + H(+). The polypeptide is Phenylalanine--tRNA ligase alpha subunit (Methanopyrus kandleri (strain AV19 / DSM 6324 / JCM 9639 / NBRC 100938)).